The following is a 231-amino-acid chain: Phosphatidylserine decarboxylase proenzyme (231 aa).

Ser-188 serves as the catalytic Schiff-base intermediate with substrate; via pyruvic acid. Ser-188 is modified (pyruvic acid (Ser); by autocatalysis).

Belongs to the phosphatidylserine decarboxylase family. PSD-A subfamily. Heterodimer of a large membrane-associated beta subunit and a small pyruvoyl-containing alpha subunit. It depends on pyruvate as a cofactor. Post-translationally, is synthesized initially as an inactive proenzyme. Formation of the active enzyme involves a self-maturation process in which the active site pyruvoyl group is generated from an internal serine residue via an autocatalytic post-translational modification. Two non-identical subunits are generated from the proenzyme in this reaction, and the pyruvate is formed at the N-terminus of the alpha chain, which is derived from the carboxyl end of the proenzyme. The post-translation cleavage follows an unusual pathway, termed non-hydrolytic serinolysis, in which the side chain hydroxyl group of the serine supplies its oxygen atom to form the C-terminus of the beta chain, while the remainder of the serine residue undergoes an oxidative deamination to produce ammonia and the pyruvoyl prosthetic group on the alpha chain.

The protein localises to the cell membrane. It catalyses the reaction a 1,2-diacyl-sn-glycero-3-phospho-L-serine + H(+) = a 1,2-diacyl-sn-glycero-3-phosphoethanolamine + CO2. It functions in the pathway phospholipid metabolism; phosphatidylethanolamine biosynthesis; phosphatidylethanolamine from CDP-diacylglycerol: step 2/2. In terms of biological role, catalyzes the formation of phosphatidylethanolamine (PtdEtn) from phosphatidylserine (PtdSer). This Rickettsia akari (strain Hartford) protein is Phosphatidylserine decarboxylase proenzyme.